Consider the following 1940-residue polypeptide: Myosin-3 (1940 aa).

One can recognise a Myosin N-terminal SH3-like domain in the interval 33–82 (DAKTYCFVVDSKEEYAKGKIKSSQDGKVTVETEDNRTLVVKPEDVYAMNP). Residues 86-779 (DKIEDMAMLT…LLGTLEEMRD (694 aa)) enclose the Myosin motor domain. Residue lysine 130 is modified to N6,N6,N6-trimethyllysine. An ATP-binding site is contributed by 179-186 (GESGAGKT). Actin-binding regions lie at residues 656-678 (LNKLMSNLRTTHPHFVRCIIPNE) and 758-772 (KFGHTKVFFKAGLLG). The IQ domain occupies 782–811 (LAKLITRTQAVCRGFLMRVEFQKMMQRRES). Residues 840–1933 (LLKSAETEKE…KTRDFTSSRM (1094 aa)) are a coiled coil. Residues 1260 to 1289 (ARGKNEETQRSLSELTTQKSRLQTEAGELS) form a disordered region. The span at 1269–1282 (RSLSELTTQKSRLQ) shows a compositional bias: polar residues.

Belongs to the TRAFAC class myosin-kinesin ATPase superfamily. Myosin family. As to quaternary structure, muscle myosin is a hexameric protein that consists of 2 heavy chain subunits (MHC), 2 alkali light chain subunits (MLC) and 2 regulatory light chain subunits (MLC-2).

The protein localises to the cytoplasm. Its subcellular location is the myofibril. Its function is as follows. Muscle contraction. This is Myosin-3 (Myh3) from Rattus norvegicus (Rat).